A 736-amino-acid polypeptide reads, in one-letter code: Dynamin-1-like protein (736 aa).

Methionine 1 carries the N-acetylmethionine modification. Residues isoleucine 22–proline 302 form the Dynamin-type G domain. Residues glycine 32 to serine 39 form a G1 motif region. Glycine 32 to serine 40 provides a ligand contact to GTP. A G2 motif region spans residues valine 58–arginine 60. The interval aspartate 146–glycine 149 is G3 motif. A G4 motif region spans residues threonine 215 to aspartate 218. GTP contacts are provided by residues threonine 215–aspartate 221 and asparagine 246–glutamine 249. Positions valine 245–serine 248 are G5 motif. Positions tyrosine 344 to isoleucine 489 are middle domain. Residues asparagine 448–glutamate 685 form an interaction with GSK3B region. The tract at residues alanine 502 to asparagine 569 is b domain. Positions glutamate 523 to arginine 590 are disordered. Serine 529 carries the post-translational modification Phosphoserine. Glycyl lysine isopeptide (Lys-Gly) (interchain with G-Cter in SUMO) cross-links involve residues lysine 532 and lysine 535. Low complexity predominate over residues proline 537–glutamate 554. Position 548 is a phosphoserine (serine 548). Positions alanine 555–lysine 568 are enriched in basic and acidic residues. Residues lysine 558 and lysine 568 each participate in a glycyl lysine isopeptide (Lys-Gly) (interchain with G-Cter in SUMO) cross-link. 2 O-linked (GlcNAc) threonine glycosylation sites follow: threonine 585 and threonine 586. Lysine 594 participates in a covalent cross-link: Glycyl lysine isopeptide (Lys-Gly) (interchain with G-Cter in SUMO). N6-acetyllysine; alternate is present on lysine 597. Lysine 597 participates in a covalent cross-link: Glycyl lysine isopeptide (Lys-Gly) (interchain with G-Cter in SUMO); alternate. Lysine 606 is covalently cross-linked (Glycyl lysine isopeptide (Lys-Gly) (interchain with G-Cter in SUMO)). Serine 607 bears the Phosphoserine mark. Lysine 608 is covalently cross-linked (Glycyl lysine isopeptide (Lys-Gly) (interchain with G-Cter in SUMO)). Residue serine 616 is modified to Phosphoserine; by CDK1 and PINK1. Position 637 is a phosphoserine; by CAMK1 and PKA (serine 637). Cysteine 644 bears the S-nitrosocysteine mark. A GED domain is found at cysteine 644–leucine 735. Residues tyrosine 654 to lysine 668 form an important for homodimerization region.

This sequence belongs to the TRAFAC class dynamin-like GTPase superfamily. Dynamin/Fzo/YdjA family. In terms of assembly, homotetramer; dimerizes through the N-terminal GTP-middle region of one molecule binding to the GED domain of another DNM1L molecule. Oligomerizes in a GTP-dependent manner to form membrane-associated tubules with a spiral pattern. Interacts with GSK3B and MARCHF5. Interacts (via the GTPase and B domains) with UBE2I; the interaction promotes sumoylation of DNM1L, mainly in its B domain. Interacts with PPP3CA; the interaction dephosphorylates DNM1L and regulates its transition to mitochondria. Interacts with BCL2L1 isoform BCL-X(L) and CLTA; DNM1L and BCL2L1 isoform BCL-X(L) may form a complex in synaptic vesicles that also contains clathrin and MFF. Interacts with MFF; the interaction is inhibited by C11orf65/MFI. Interacts with FIS1; may form part of a larger protein complex at the endoplasmic reticulum-mitochondrial interface during mitochondrial fission. Interacts with CANX. Interacts with BCAP31. Interacts with MIEF2 and MIEF1; GTP-dependent, regulates GTP hydrolysis and DNM1L oligomerization. Interacts with PGAM5; this interaction leads to dephosphorylation at Ser-656 and activation of GTPase activity and eventually to mitochondria fragmentation. Interacts with RALBP1; during mitosis, recruits DNM1L to the mitochondrion and mediates its activation by the mitotic kinase cyclin B-CDK1. Interacts with FUNDC1; this interaction recruits DNM1L/DRP1 at ER-mitochondria contact sites. Post-translationally, phosphorylation/dephosphorylation events on two sites near the GED domain regulate mitochondrial fission. Phosphorylation on Ser-637 by CAMK1 and PKA inhibits the GTPase activity, leading to a defect in mitochondrial fission promoting mitochondrial elongation. Dephosphorylated on this site by PPP3CA which promotes mitochondrial fission. Phosphorylation on Ser-616 by CDK1 and PINK1 activates the GTPase activity and promotes mitochondrial fission. Phosphorylated in a circadian manner at Ser-637. Dephosphorylated by PGAM5. In terms of processing, sumoylated on various lysine residues within the B domain, probably by MUL1. Sumoylation positively regulates mitochondrial fission. Desumoylated by SENP5 during G2/M transition of mitosis. Appears to be linked to its catalytic activity. S-nitrosylation increases DNM1L dimerization, mitochondrial fission and causes neuronal damage. Post-translationally, ubiquitination by MARCHF5 affects mitochondrial morphology. In terms of processing, O-GlcNAcylation augments the level of the GTP-bound active form of DNM1L and induces translocation from the cytoplasm to mitochondria in cardiomyocytes. It also decreases phosphorylation at Ser-637. In terms of tissue distribution, ubiquitously expressed with highest levels found in skeletal muscles, heart, kidney and brain. Isoform 1 is brain-specific. Isoform 2 and isoform 3 are predominantly expressed in testis and skeletal muscles respectively. Isoform 4 is weakly expressed in brain, heart and kidney. Isoform 5 is dominantly expressed in liver, heart and kidney. Isoform 6 is expressed in neurons.

The protein resides in the cytoplasm. It is found in the cytosol. Its subcellular location is the golgi apparatus. The protein localises to the endomembrane system. It localises to the mitochondrion outer membrane. The protein resides in the peroxisome. It is found in the membrane. Its subcellular location is the clathrin-coated pit. The protein localises to the cytoplasmic vesicle. It localises to the secretory vesicle. The protein resides in the synaptic vesicle membrane. The catalysed reaction is GTP + H2O = GDP + phosphate + H(+). Its activity is regulated as follows. GTPase activity is increased by binding to phospholipid membranes. Functionally, functions in mitochondrial and peroxisomal division. Mediates membrane fission through oligomerization into membrane-associated tubular structures that wrap around the scission site to constrict and sever the mitochondrial membrane through a GTP hydrolysis-dependent mechanism. The specific recruitment at scission sites is mediated by membrane receptors like MFF, MIEF1 and MIEF2 for mitochondrial membranes. While the recruitment by the membrane receptors is GTP-dependent, the following hydrolysis of GTP induces the dissociation from the receptors and allows DNM1L filaments to curl into closed rings that are probably sufficient to sever a double membrane. Acts downstream of PINK1 to promote mitochondrial fission in a PRKN-dependent manner. Plays an important role in mitochondrial fission during mitosis. Through its function in mitochondrial division, ensures the survival of at least some types of postmitotic neurons, including Purkinje cells, by suppressing oxidative damage. Required for normal brain development, including that of cerebellum. Facilitates developmentally regulated apoptosis during neural tube formation. Required for a normal rate of cytochrome c release and caspase activation during apoptosis; this requirement may depend upon the cell type and the physiological apoptotic cues. Required for formation of endocytic vesicles. Proposed to regulate synaptic vesicle membrane dynamics through association with BCL2L1 isoform Bcl-X(L) which stimulates its GTPase activity in synaptic vesicles; the function may require its recruitment by MFF to clathrin-containing vesicles. Required for programmed necrosis execution. Rhythmic control of its activity following phosphorylation at Ser-637 is essential for the circadian control of mitochondrial ATP production. Its function is as follows. Inhibits peroxisomal division when overexpressed. This chain is Dynamin-1-like protein, found in Homo sapiens (Human).